We begin with the raw amino-acid sequence, 586 residues long: Asparagine synthetase [glutamine-hydrolyzing] (586 aa).

The active-site For GATase activity is the Cys-2. One can recognise a Glutamine amidotransferase type-2 domain in the interval 2–185 (CGILAVLGVV…PGHLYSSKTG (184 aa)). Residues 50 to 54 (RLAII), 75 to 77 (NGE), and Asp-98 each bind L-glutamine. Residues 193 to 516 (PPWFSETVPS…PQDSARETVP (324 aa)) form the Asparagine synthetase domain. ATP contacts are provided by residues Leu-231, Ile-267, and 341–342 (SG).

It carries out the reaction L-aspartate + L-glutamine + ATP + H2O = L-asparagine + L-glutamate + AMP + diphosphate + H(+). It functions in the pathway amino-acid biosynthesis; L-asparagine biosynthesis; L-asparagine from L-aspartate (L-Gln route): step 1/1. In terms of biological role, essential for nitrogen assimilation, distribution and remobilization within the plant via the phloem. This is Asparagine synthetase [glutamine-hydrolyzing] (ASN1) from Zea mays (Maize).